The chain runs to 72 residues: DNA-directed RNA polymerase subunit omega (72 aa).

This sequence belongs to the RNA polymerase subunit omega family. The RNAP catalytic core consists of 2 alpha, 1 beta, 1 beta' and 1 omega subunit. When a sigma factor is associated with the core the holoenzyme is formed, which can initiate transcription.

The catalysed reaction is RNA(n) + a ribonucleoside 5'-triphosphate = RNA(n+1) + diphosphate. Promotes RNA polymerase assembly. Latches the N- and C-terminal regions of the beta' subunit thereby facilitating its interaction with the beta and alpha subunits. The polypeptide is DNA-directed RNA polymerase subunit omega (Clostridium botulinum (strain Langeland / NCTC 10281 / Type F)).